Here is a 389-residue protein sequence, read N- to C-terminus: Putative F-box protein At3g10240 (389 aa).

Residues M1 to S26 are disordered. The span at K9–K21 shows a compositional bias: basic residues. The region spanning K21–L66 is the F-box domain.

This Arabidopsis thaliana (Mouse-ear cress) protein is Putative F-box protein At3g10240.